We begin with the raw amino-acid sequence, 116 residues long: Large ribosomal subunit protein bL19 (116 aa).

The protein belongs to the bacterial ribosomal protein bL19 family.

In terms of biological role, this protein is located at the 30S-50S ribosomal subunit interface and may play a role in the structure and function of the aminoacyl-tRNA binding site. The chain is Large ribosomal subunit protein bL19 from Staphylococcus aureus (strain USA300).